The chain runs to 498 residues: Glycerol kinase (498 aa).

Threonine 14 contacts ADP. 2 residues coordinate ATP: threonine 14 and threonine 15. Threonine 14 is a sn-glycerol 3-phosphate binding site. Residue arginine 18 coordinates ADP. The sn-glycerol 3-phosphate site is built by arginine 84, glutamate 85, tyrosine 136, and aspartate 246. Residues arginine 84, glutamate 85, tyrosine 136, aspartate 246, and glutamine 247 each contribute to the glycerol site. The ADP site is built by threonine 268 and glycine 311. Residues threonine 268, glycine 311, glutamine 315, and glycine 412 each coordinate ATP. ADP is bound by residues glycine 412 and asparagine 416.

The protein belongs to the FGGY kinase family.

The catalysed reaction is glycerol + ATP = sn-glycerol 3-phosphate + ADP + H(+). Its pathway is polyol metabolism; glycerol degradation via glycerol kinase pathway; sn-glycerol 3-phosphate from glycerol: step 1/1. With respect to regulation, inhibited by fructose 1,6-bisphosphate (FBP). In terms of biological role, key enzyme in the regulation of glycerol uptake and metabolism. Catalyzes the phosphorylation of glycerol to yield sn-glycerol 3-phosphate. The chain is Glycerol kinase from Leptospira biflexa serovar Patoc (strain Patoc 1 / Ames).